Here is a 137-residue protein sequence, read N- to C-terminus: ATP synthase epsilon chain (137 aa).

The protein belongs to the ATPase epsilon chain family. In terms of assembly, F-type ATPases have 2 components, CF(1) - the catalytic core - and CF(0) - the membrane proton channel. CF(1) has five subunits: alpha(3), beta(3), gamma(1), delta(1), epsilon(1). CF(0) has three main subunits: a, b and c.

The protein resides in the cell membrane. Produces ATP from ADP in the presence of a proton gradient across the membrane. The polypeptide is ATP synthase epsilon chain (Streptococcus agalactiae serotype III (strain NEM316)).